A 123-amino-acid polypeptide reads, in one-letter code: Small ribosomal subunit protein uS12 (123 aa).

Position 89 is a 3-methylthioaspartic acid (Asp89).

It belongs to the universal ribosomal protein uS12 family. Part of the 30S ribosomal subunit. Contacts proteins S8 and S17. May interact with IF1 in the 30S initiation complex.

With S4 and S5 plays an important role in translational accuracy. In terms of biological role, interacts with and stabilizes bases of the 16S rRNA that are involved in tRNA selection in the A site and with the mRNA backbone. Located at the interface of the 30S and 50S subunits, it traverses the body of the 30S subunit contacting proteins on the other side and probably holding the rRNA structure together. The combined cluster of proteins S8, S12 and S17 appears to hold together the shoulder and platform of the 30S subunit. The chain is Small ribosomal subunit protein uS12 from Syntrophus aciditrophicus (strain SB).